The sequence spans 251 residues: Small ribosomal subunit protein uS2 (251 aa).

This sequence belongs to the universal ribosomal protein uS2 family.

This is Small ribosomal subunit protein uS2 from Synechococcus sp. (strain ATCC 27144 / PCC 6301 / SAUG 1402/1) (Anacystis nidulans).